The primary structure comprises 348 residues: Dihydroorotase (348 aa).

2 residues coordinate Zn(2+): His17 and His19. Residues 19–21 (HLR) and Asn45 each bind substrate. 3 residues coordinate Zn(2+): Lys103, His140, and His178. Residue Lys103 is modified to N6-carboxylysine. His140 lines the substrate pocket. Leu223 serves as a coordination point for substrate. Asp251 provides a ligand contact to Zn(2+). Asp251 is a catalytic residue. Substrate contacts are provided by His255 and Ala267.

This sequence belongs to the metallo-dependent hydrolases superfamily. DHOase family. Class II DHOase subfamily. In terms of assembly, homodimer. Zn(2+) serves as cofactor.

The enzyme catalyses (S)-dihydroorotate + H2O = N-carbamoyl-L-aspartate + H(+). The protein operates within pyrimidine metabolism; UMP biosynthesis via de novo pathway; (S)-dihydroorotate from bicarbonate: step 3/3. Catalyzes the reversible cyclization of carbamoyl aspartate to dihydroorotate. The protein is Dihydroorotase of Cronobacter sakazakii (strain ATCC BAA-894) (Enterobacter sakazakii).